The sequence spans 89 residues: Small ribosomal subunit protein bS18 (89 aa).

Belongs to the bacterial ribosomal protein bS18 family. Part of the 30S ribosomal subunit. Forms a tight heterodimer with protein bS6.

Its function is as follows. Binds as a heterodimer with protein bS6 to the central domain of the 16S rRNA, where it helps stabilize the platform of the 30S subunit. This is Small ribosomal subunit protein bS18 from Phocaeicola vulgatus (strain ATCC 8482 / DSM 1447 / JCM 5826 / CCUG 4940 / NBRC 14291 / NCTC 11154) (Bacteroides vulgatus).